The following is a 195-amino-acid chain: Cbp/p300-interacting transactivator 1 (195 aa).

Disordered regions lie at residues 1 to 24 and 51 to 149; these read MPTMSRPALDVKGGTSPVKENANP and ASNG…SPAI. Residues 54 to 78 are compositionally biased toward low complexity; sequence GTKASGAPTSSSGSPSPISSSTATP. A compositionally biased stretch (polar residues) spans 97–106; the sequence is MQLQKLNSQY. The segment covering 137-148 has biased composition (low complexity); sequence SLSPSAGAQSPA. The Nuclear export signal signature appears at 160–169; sequence LMSLVVELGL.

It belongs to the CITED family. Interacts (via C-terminus) with CREBBP. Interacts with EGR2. Homodimer. Binds to RBM14. Interacts (via N-terminus) with HSPA8; the interaction suppresses the association of CITED1 with p300/CBP and SMAD-mediated transcription transactivation. Interacts (via C-terminus) with TOX3 (via HGM box); the interaction increases estrogen-response element (ERE)-dependent transcription and protection against cell death. Interacts with ESR1; the interaction occurs in a estrogen-dependent manner. Interacts (unphosphorylated form preferentially and via C-terminus) with EP300. In terms of processing, phosphorylated. Phosphorylation changes in a cell cycle-dependent manner and reduces its transcriptional cofactor activity.

It is found in the nucleus. Its subcellular location is the cytoplasm. Its function is as follows. Transcriptional coactivator of the p300/CBP-mediated transcription complex. Enhances SMAD-mediated transcription by strengthening the functional link between the DNA-binding SMAD transcription factors and the p300/CBP transcription coactivator complex. Stimulates estrogen-dependent transactivation activity mediated by estrogen receptors signaling; stabilizes the interaction of estrogen receptor ESR1 and histone acetyltransferase EP300. Positively regulates TGF-beta signaling through its association with the SMAD/p300/CBP-mediated transcriptional coactivator complex. Induces transcription from estrogen-responsive promoters and protection against cell death. Potentiates EGR2-mediated transcriptional activation activity from the ERBB2 promoter. Acts as an inhibitor of osteoblastic mineralization through a cAMP-dependent parathyroid hormone receptor signaling. May play a role in pigmentation of melanocytes. Associates with chromatin to the estrogen-responsive TGF-alpha promoter region in a estrogen-dependent manner. The sequence is that of Cbp/p300-interacting transactivator 1 (CITED1) from Bos taurus (Bovine).